Here is a 485-residue protein sequence, read N- to C-terminus: Adenosylhomocysteinase 1 (485 aa).

Substrate is bound by residues Thr-64, Asp-139, and Glu-205. 206–208 (TTT) serves as a coordination point for NAD(+). Residues Lys-235 and Asp-239 each coordinate substrate. NAD(+) contacts are provided by residues 271 to 276 (GDVGKG), Glu-292, 348 to 350 (IGH), Asn-397, His-404, Lys-479, 479 to 483 (KPPHY), and Tyr-483.

The protein belongs to the adenosylhomocysteinase family. In terms of assembly, homotetramer. NAD(+) is required as a cofactor.

It carries out the reaction S-adenosyl-L-homocysteine + H2O = L-homocysteine + adenosine. It functions in the pathway amino-acid biosynthesis; L-homocysteine biosynthesis; L-homocysteine from S-adenosyl-L-homocysteine: step 1/1. Essential protein during embryogenesis. Adenosylhomocysteine is a competitive inhibitor of S-adenosyl-L-methionine-dependent methyl transferase reactions; therefore adenosylhomocysteinase may play a key role in the control of methylations via regulation of the intracellular concentration of adenosylhomocysteine. Required for DNA methylation-dependent gene silencing. The chain is Adenosylhomocysteinase 1 from Arabidopsis thaliana (Mouse-ear cress).